The chain runs to 843 residues: Protein PLASTID MOVEMENT IMPAIRED 1 (843 aa).

Positions 30-58 are enriched in polar residues; the sequence is PQVSVGNRRTNSLALPRSSVPSLVTSADE. Disordered stretches follow at residues 30–65 and 88–116; these read PQVS…ARAE and LEVE…SGVK. A C2 NT-type domain is found at 131-284; that stretch reads LVRIGMQKLS…ELALKLGFQI (154 aa). Disordered stretches follow at residues 300–412 and 450–472; these read FGMK…GTIG and MMKD…EEEQ. A compositionally biased stretch (polar residues) spans 307–336; sequence KPKNFANSFGRKQSKTSFSVPSPKMTSRSE. Phosphoserine occurs at positions 314 and 328. Residues 365 to 381 are compositionally biased toward basic and acidic residues; the sequence is PEEKPVQKNDKPEQRAE. Phosphothreonine is present on Thr-404. A Phosphoserine modification is found at Ser-407. Thr-410 bears the Phosphothreonine mark. The span at 456-472 shows a compositional bias: acidic residues; sequence DGGDGETESQRLDEEEQ. At Ser-507 the chain carries Phosphoserine.

Expressed in leaves, stems, cauline leaves, and flowers but not in roots. Present in leaves in both mesophyll and pavement cells.

Its subcellular location is the cytoplasm. Functionally, necessary for chloroplast and nuclear photorelocation movements via the regulation of chloroplast-actin (cp-actin) filaments in mesophyll cells, and together with PMIR1, in pavement cells. Required component for both the low- and high-light-dependent chloroplast movement responses via an abscisic acid (ABA) pathway. Involved in the ABA response pathway during seed germination. Modulates ABA accumulation during periods of water deficit at the seedling stage. The polypeptide is Protein PLASTID MOVEMENT IMPAIRED 1 (Arabidopsis thaliana (Mouse-ear cress)).